A 256-amino-acid chain; its full sequence is Thiazole synthase (256 aa).

The active-site Schiff-base intermediate with DXP is Lys-95. 1-deoxy-D-xylulose 5-phosphate-binding positions include Gly-156, 182–183, and 204–205; these read AG and NT.

The protein belongs to the ThiG family. Homotetramer. Forms heterodimers with either ThiH or ThiS.

It localises to the cytoplasm. The enzyme catalyses [ThiS sulfur-carrier protein]-C-terminal-Gly-aminoethanethioate + 2-iminoacetate + 1-deoxy-D-xylulose 5-phosphate = [ThiS sulfur-carrier protein]-C-terminal Gly-Gly + 2-[(2R,5Z)-2-carboxy-4-methylthiazol-5(2H)-ylidene]ethyl phosphate + 2 H2O + H(+). It functions in the pathway cofactor biosynthesis; thiamine diphosphate biosynthesis. In terms of biological role, catalyzes the rearrangement of 1-deoxy-D-xylulose 5-phosphate (DXP) to produce the thiazole phosphate moiety of thiamine. Sulfur is provided by the thiocarboxylate moiety of the carrier protein ThiS. In vitro, sulfur can be provided by H(2)S. The polypeptide is Thiazole synthase (Salmonella enteritidis PT4 (strain P125109)).